A 58-amino-acid polypeptide reads, in one-letter code: Cecropin-A (58 aa).

The signal sequence occupies residues 1–23; it reads MNFSKIFIFVVLAVLLLCSQTEA. The residue at position 57 (Leu57) is a Leucine amide.

This sequence belongs to the cecropin family. Relatively abundant in head, thorax and to a lesser extent in abdominal carcass and anterior midgut.

It is found in the secreted. In terms of biological role, antibacterial activity against several Gram-positive and Gram-negative bacteria. Antifungal activity against A.fumigatus, B.cinerea, F.culmorum, F.oxysporum, N.crassa, C.albicans, C.neoformans and S.cerevisiae. The protein is Cecropin-A (CecA) of Anopheles gambiae (African malaria mosquito).